We begin with the raw amino-acid sequence, 208 residues long: Putative archaetidylserine decarboxylase proenzyme (208 aa).

Catalysis depends on Ser172, which acts as the Schiff-base intermediate with substrate; via pyruvic acid. The residue at position 172 (Ser172) is a Pyruvic acid (Ser); by autocatalysis.

This sequence belongs to the phosphatidylserine decarboxylase family. PSD-A subfamily. Heterodimer of a large membrane-associated beta subunit and a small pyruvoyl-containing alpha subunit. Requires pyruvate as cofactor. Post-translationally, is synthesized initially as an inactive proenzyme. Formation of the active enzyme involves a self-maturation process in which the active site pyruvoyl group is generated from an internal serine residue via an autocatalytic post-translational modification. Two non-identical subunits are generated from the proenzyme in this reaction, and the pyruvate is formed at the N-terminus of the alpha chain, which is derived from the carboxyl end of the proenzyme. The post-translation cleavage follows an unusual pathway, termed non-hydrolytic serinolysis, in which the side chain hydroxyl group of the serine supplies its oxygen atom to form the C-terminus of the beta chain, while the remainder of the serine residue undergoes an oxidative deamination to produce ammonia and the pyruvoyl prosthetic group on the alpha chain.

The protein localises to the cell membrane. The catalysed reaction is archaetidylserine + H(+) = archaetidylethanolamine + CO2. In terms of biological role, catalyzes the formation of archaetidylethanolamine (PtdEtn) from archaetidylserine (PtdSer). The sequence is that of Putative archaetidylserine decarboxylase proenzyme from Methanosarcina acetivorans (strain ATCC 35395 / DSM 2834 / JCM 12185 / C2A).